The chain runs to 329 residues: L-lactate dehydrogenase (329 aa).

NAD(+) is bound by residues V18, E39, K46, Y71, and 85-86 (GA). Residues Q88 and R94 each contribute to the substrate site. Residues S107, 124–126 (AAN), and S149 contribute to the NAD(+) site. 126–129 (NPVD) contacts substrate. 154-157 (DSAR) serves as a coordination point for substrate. Residues R159 and H174 each coordinate beta-D-fructose 1,6-bisphosphate. H181 acts as the Proton acceptor in catalysis. Phosphotyrosine is present on Y226. Substrate is bound at residue T235.

The protein belongs to the LDH/MDH superfamily. LDH family. Homotetramer.

It is found in the cytoplasm. It catalyses the reaction (S)-lactate + NAD(+) = pyruvate + NADH + H(+). Its pathway is fermentation; pyruvate fermentation to lactate; (S)-lactate from pyruvate: step 1/1. Allosterically activated by fructose 1,6-bisphosphate (FBP). Catalyzes the conversion of lactate to pyruvate. The chain is L-lactate dehydrogenase from Streptococcus equinus (Streptococcus bovis).